Here is a 189-residue protein sequence, read N- to C-terminus: Movement protein p22 (189 aa).

This sequence belongs to the tombusvirus/aureusvirus movement protein p22 family. Interacts with host protein HFI22. Post-translationally, phosphorylated.

Its subcellular location is the host membrane. In terms of biological role, cell-to-cell movement. Displays RNA-binding activity. This is Movement protein p22 from Capsicum annuum (Capsicum pepper).